Consider the following 189-residue polypeptide: Molybdenum cofactor guanylyltransferase (189 aa).

Residues 10–12 (LAG), lysine 23, asparagine 51, aspartate 69, and aspartate 99 each bind GTP. Mg(2+) is bound at residue aspartate 99.

It belongs to the MobA family. In terms of assembly, monomer. Mg(2+) is required as a cofactor.

The protein localises to the cytoplasm. The enzyme catalyses Mo-molybdopterin + GTP + H(+) = Mo-molybdopterin guanine dinucleotide + diphosphate. Transfers a GMP moiety from GTP to Mo-molybdopterin (Mo-MPT) cofactor (Moco or molybdenum cofactor) to form Mo-molybdopterin guanine dinucleotide (Mo-MGD) cofactor. This chain is Molybdenum cofactor guanylyltransferase, found in Pasteurella multocida (strain Pm70).